A 216-amino-acid polypeptide reads, in one-letter code: CDP-diacylglycerol--glycerol-3-phosphate 3-phosphatidyltransferase (216 aa).

4 helical membrane-spanning segments follow: residues 40-60 (VVSIASVLLFLFIACTDFLDG), 88-108 (VMLCLVADNFMPVFLFLCILY), 141-161 (MGAVLFSLLLKALYAFELAGA), and 176-196 (VVPVVLALASFFSYLKTFFPI).

Belongs to the CDP-alcohol phosphatidyltransferase class-I family.

Its subcellular location is the cell membrane. The catalysed reaction is a CDP-1,2-diacyl-sn-glycerol + sn-glycerol 3-phosphate = a 1,2-diacyl-sn-glycero-3-phospho-(1'-sn-glycero-3'-phosphate) + CMP + H(+). The protein operates within phospholipid metabolism; phosphatidylglycerol biosynthesis; phosphatidylglycerol from CDP-diacylglycerol: step 1/2. In terms of biological role, this protein catalyzes the committed step to the synthesis of the acidic phospholipids. The chain is CDP-diacylglycerol--glycerol-3-phosphate 3-phosphatidyltransferase (pgsA) from Treponema pallidum (strain Nichols).